The chain runs to 447 residues: Glutamate--tRNA ligase 1 (447 aa).

Positions 10-20 (PSPTGMLHVGN) match the 'HIGH' region motif. A 'KMSKS' region motif is present at residues 240–244 (KISKR). Residue lysine 243 coordinates ATP.

This sequence belongs to the class-I aminoacyl-tRNA synthetase family. Glutamate--tRNA ligase type 1 subfamily. Monomer.

The protein resides in the cytoplasm. It carries out the reaction tRNA(Glu) + L-glutamate + ATP = L-glutamyl-tRNA(Glu) + AMP + diphosphate. Catalyzes the attachment of glutamate to tRNA(Glu) in a two-step reaction: glutamate is first activated by ATP to form Glu-AMP and then transferred to the acceptor end of tRNA(Glu). This chain is Glutamate--tRNA ligase 1, found in Rickettsia prowazekii (strain Madrid E).